A 325-amino-acid chain; its full sequence is Putative HTH-type transcriptional regulatory protein HQ_3058A (325 aa).

The 55-residue stretch at 132 to 186 (LADEREERGWSLGRLATELGVSRRTVSKYEDGMNASIEIAIQLEEVFDEPFSSPL) folds into the HTH cro/C1-type domain. A DNA-binding region (H-T-H motif) is located at residues 143-162 (LGRLATELGVSRRTVSKYED). The interval 189–211 (MEGAESVRDSEPTPDDPDPDADD) is disordered. The segment covering 200–211 (PTPDDPDPDADD) has biased composition (acidic residues).

The chain is Putative HTH-type transcriptional regulatory protein HQ_3058A from Haloquadratum walsbyi (strain DSM 16790 / HBSQ001).